A 339-amino-acid chain; its full sequence is Lymphocyte-specific protein 1 (339 aa).

The disordered stretch occupies residues Met-1–Leu-198. Residue Ser-24 is modified to Phosphoserine. Basic and acidic residues-rich tracts occupy residues Val-32 to Gln-43 and Gly-51 to Gln-61. Phosphoserine is present on Ser-111. Residues Glu-117–Leu-140 are compositionally biased toward basic and acidic residues. At Thr-175 the chain carries Phosphothreonine. 4 positions are modified to phosphoserine: Ser-177, Ser-188, Ser-189, and Ser-193. Residues Ile-185–Thr-196 show a composition bias toward polar residues. Ser-252 is subject to Phosphoserine; by MAPKAPK2. Residues Lys-294–Gly-315 are disordered. The segment covering Lys-300 to Gly-315 has biased composition (low complexity). Lys-327 carries the N6-acetyllysine modification.

As to quaternary structure, binds actin. Post-translationally, phosphorylated by casein kinase II, protein kinase C and MAPKAPK2. Phosphorylation by PKC induces translocation from membrane to cytoplasm. Phosphorylation by MAPKAPK2 may regulate neutrophil chemotaxis. As to expression, activated T-lymphocytes.

It localises to the cell membrane. In terms of biological role, may play a role in mediating neutrophil activation and chemotaxis. This is Lymphocyte-specific protein 1 (LSP1) from Homo sapiens (Human).